The primary structure comprises 76 residues: ATP synthase subunit c (76 aa).

2 consecutive transmembrane segments (helical) span residues 13-33 and 55-75; these read LNVV…GILI and FLGL…AFIF.

This sequence belongs to the ATPase C chain family. F-type ATPases have 2 components, F(1) - the catalytic core - and F(0) - the membrane proton channel. F(1) has five subunits: alpha(3), beta(3), gamma(1), delta(1), epsilon(1). F(0) has three main subunits: a(1), b(2) and c(10-14). The alpha and beta chains form an alternating ring which encloses part of the gamma chain. F(1) is attached to F(0) by a central stalk formed by the gamma and epsilon chains, while a peripheral stalk is formed by the delta and b chains.

The protein localises to the cell membrane. In terms of biological role, f(1)F(0) ATP synthase produces ATP from ADP in the presence of a proton or sodium gradient. F-type ATPases consist of two structural domains, F(1) containing the extramembraneous catalytic core and F(0) containing the membrane proton channel, linked together by a central stalk and a peripheral stalk. During catalysis, ATP synthesis in the catalytic domain of F(1) is coupled via a rotary mechanism of the central stalk subunits to proton translocation. Its function is as follows. Key component of the F(0) channel; it plays a direct role in translocation across the membrane. A homomeric c-ring of between 10-14 subunits forms the central stalk rotor element with the F(1) delta and epsilon subunits. The sequence is that of ATP synthase subunit c from Bifidobacterium animalis subsp. lactis (strain AD011).